The primary structure comprises 393 residues: Formate-dependent phosphoribosylglycinamide formyltransferase (393 aa).

Residues 22–23 and glutamate 82 contribute to the N(1)-(5-phospho-beta-D-ribosyl)glycinamide site; that span reads EL. ATP-binding positions include arginine 114, lysine 155, 160-165, 195-198, and glutamate 203; these read SSGKGQ and EGFV. An ATP-grasp domain is found at 119–308; it reads RLAAEDLGIP…EFALHLRAIL (190 aa). Mg(2+) is bound by residues glutamate 267 and glutamate 279. Residues aspartate 286, lysine 356, and 363-364 each bind N(1)-(5-phospho-beta-D-ribosyl)glycinamide; that span reads RR.

The protein belongs to the PurK/PurT family. As to quaternary structure, homodimer.

The enzyme catalyses N(1)-(5-phospho-beta-D-ribosyl)glycinamide + formate + ATP = N(2)-formyl-N(1)-(5-phospho-beta-D-ribosyl)glycinamide + ADP + phosphate + H(+). The protein operates within purine metabolism; IMP biosynthesis via de novo pathway; N(2)-formyl-N(1)-(5-phospho-D-ribosyl)glycinamide from N(1)-(5-phospho-D-ribosyl)glycinamide (formate route): step 1/1. Its function is as follows. Involved in the de novo purine biosynthesis. Catalyzes the transfer of formate to 5-phospho-ribosyl-glycinamide (GAR), producing 5-phospho-ribosyl-N-formylglycinamide (FGAR). Formate is provided by PurU via hydrolysis of 10-formyl-tetrahydrofolate. The protein is Formate-dependent phosphoribosylglycinamide formyltransferase of Hydrogenovibrio crunogenus (strain DSM 25203 / XCL-2) (Thiomicrospira crunogena).